A 117-amino-acid polypeptide reads, in one-letter code: Protein MGF 110-11L (117 aa).

Residues 3–23 (VFLGLLLGYSTILILTYQSPA) form a helical membrane-spanning segment. Asn62 carries an N-linked (GlcNAc...) asparagine; by host glycan. Helical transmembrane passes span 69-89 (YYCFYLVFSFAFAGCIAFAIC) and 94-114 (LCTTMKLLMLLSILVLLSQPI).

It belongs to the asfivirus MGF 110 family.

The protein resides in the host membrane. In terms of biological role, plays a role in virus cell tropism, and may be required for efficient virus replication in macrophages. The protein is Protein MGF 110-11L of African swine fever virus (isolate Warthog/Namibia/Wart80/1980) (ASFV).